The primary structure comprises 280 residues: Inhibitor of growth protein 2 (280 aa).

A coiled-coil region spans residues 48-120 (VLRELDNKYQ…VENRARQMEL (73 aa)). The disordered stretch occupies residues 122-204 (SQCFQDPAES…KQEREASPVE (83 aa)). A compositionally biased stretch (basic and acidic residues) spans 130 to 140 (ESERASDKAKM). Positions 181–193 (KKSKSAKKKKRSK) are enriched in basic residues. Residue Lys-195 forms a Glycyl lysine isopeptide (Lys-Gly) (interchain with G-Cter in SUMO1) linkage. The PHD-type zinc-finger motif lies at 212-261 (PTYCLCNQVSYGEMIGCDNEQCPIEWFHFSCVSLTYKPKGKWYCPKCRGD). Zn(2+)-binding residues include Cys-215, Cys-217, Cys-228, Cys-233, His-239, Cys-242, Cys-255, and Cys-258. Basic and acidic residues predominate over residues 258 to 274 (CRGDNEKTMDKSTEKTK). The interval 258-280 (CRGDNEKTMDKSTEKTKKDRRSR) is disordered. Positions 264–280 (KTMDKSTEKTKKDRRSR) are PBR.

It belongs to the ING family. Interacts with H3K4me3 and to a lesser extent with H3K4me2. Component of a mSin3A-like complex at least consisting of SIN3A, HDAC1, HDAC2, RBBP4/RbAp48, RBBP7/RbAp46, SAP30 and ING2. Post-translationally, sumoylation enhances its association with SIN3A and is required for binding to some target gene promoters, this is the case for TMEM71. As to expression, widely expressed. Higher expressed in colon-cancer tumor than in normal colon tissues.

The protein resides in the nucleus. Its function is as follows. Seems to be involved in p53/TP53 activation and p53/TP53-dependent apoptotic pathways, probably by enhancing acetylation of p53/TP53. Component of a mSin3A-like corepressor complex, which is probably involved in deacetylation of nucleosomal histones. ING2 activity seems to be modulated by binding to phosphoinositides (PtdInsPs). This chain is Inhibitor of growth protein 2 (ING2), found in Homo sapiens (Human).